The sequence spans 2684 residues: MFQHRTTNAQGPPPNRPMPRPPAGMPMMTSSHEHDYTNDYEDPEEMARSRGEGFSNHLLIKTTPPPQPHPNFNSYEMSMSQQRRSQQHQQPMAPPLSDCWGSGVHDSGVLHKNADGAYYIPSGSLRTTSSTLSPASGQRYLDQPHTSGGAPNPTYSDASTTLLKYPLAAGTNQNRRRQQVGTMNNGDPVAGGPMALSKKKKKFDDDSDTCSRWPSKWNILLAAALLVALFVICILLFRAPNYVYTQPAPSSDATSSAAAAASRYQDLGLRALPPAISLGERVDVEFFPKSMATTELTVTKPSRIRFNATVGSGAQLVLLMSAGVHPSLSLHDALFPIRADRIRDSKSPTHIVEEFGSRSRRSLGASSSRHRNIEILSPRSATFEQFVLEGRHYLTFINERSRVEPISFVAEELQRPTTPPKTSSSGTSGAKEHPLASVLVCESNCNQRGECVHGKCHCAPGFTGRTCDEAVCPVVCSGNGVFSGGICVCKSGFKGKECEMRHNWCEVADCNGRGRCDTDGRCRCNPGWTGEACELRACPHASCHDRGVCVNGTCYCMDGWRGNDCSVFADAIVHVPQAQSPPRRGQEPTESSKTRKAQVKPTPTSEKKKESRELQKPIIATVQVPTESSHPCSAHGQLIDDICQCESGWDSVDCSQQACQCVNGDCLDDGSCQCWKGWRGSNCTDKKCAIGCEDRGKCASDGSCKCSSGWNGENCAIDGCPNQCSGKGECGMDRRSSEWSCRCQAGSTGVDCSVSVEMHCDDGLDNDSDGLIDCDDPECCSSSSCSSESVCSTAASPIEVLMRMPPIFNANFAQRVGFLIMEKSVQSYTDSSQFNENLISVIRGRVMWGGSPTGSDDLSTYSNKSTVPLVGVRVSDAAHPLYGFTLTREDGYFDLTVNGARSVTLQFLRTQFQSVKKSVFVSPRQIIHIDDIVLYRQSGGSPPAISMAPARAKCSPTLRRIPDVVLISNWQYTSDGIETDETSDSSRIVVDSRSIFESLPIQGTDVRLVYDSARSPAAPSTMLIGLLYDRVDKELRKVHINIRIAGRRFDRVLAPRTNLTYVFAWDKMNAYRQSESGLVPVTVRVGYEYQGCDRTSERVWQTRRSQMMGATARKMIGTMWTLDIHHHLDIVNNVVEMGNGGYRLITESEPRVSTFAGLDGVKRDVECLKCEGKVDSISLFRPTTVVYAQDGSLIIGDHNMIRRVSQDGQVSTILTLGLADTSHSYYIAVSPVDGTIAISLPLHKQVWRISSLEPQDSRNNYDVLAGDGTVCASAVDSCGDGALAQNAQLIFPKGISFDKMGNLYLADSRRIRVIDTTGHIRSIGETTPDQHPIRTCAQITKLVDLQMEWPTSLTIDPITGSVLVLDTNVVYEIDVVHDVVTIALGSPTTCDLANATSSASAKSLDHRRHLIQNARDITVGTDGAIYVVESDGRRLNQVRKLSSDRSTFSILTGGKSPCSCDVAACGCDDAVSLRDVAASQAHLSSPYAVCVSPSGDVIIADSGNSKIKKVSARMAKYDGRSRTYEVTDAERQEKYTFNRHGQHSSTVSLITGRTFFNFSYQVDSPISMISEIRAASGVVLRVLKRNDSLFDLETTLGQRTTLTMSAYDGTLEQVSKRDSATSRDATKLFYKKGLLTSRIDVATAVGFEYDEYGRAIGLKRDREYWRLGEETISMGSVNTEVLLNGQRFQQVRLGEGNLAVHSTNGATTRLISLRNEGYSLASPLGTSTLYDKSSSIPDSNGEPLISRRRTKVPAIGNPQRRELTTRWDWRHVARRGDDSDGSLGRRKVAEINGVNMFSMEYDVKSNQDTLRLGSTTDDAQALLFIDYTSSGRIRRISAPEDSQMAEMNITWDGAGRKSEVTWGSWKIRLTYDNSNRLTEHAIDGARVPIKMSYAGASRRPNEIQHDGAKWNIQYDNYDRIKEVISKSQEATSFSSIALGGDEWVLKRRTSLNSKPSLVRLSREGKVLESTTPDENHYWLERKDPITGRTTEILNDEETTVVTCWSPEGAPMCSRSRNLQENTTMQGHLVARKSVTIMTPTSSEPSITSSFTYEYDDMLRVTTIQPVIEQSVLESIQLSYDERRGHVAAINGFKWARDASTSRCQGHGLMYETSKANDHRQVVERKLIFGDARASIKIIRDKAGRASESHLEISSSGTQRNQKITRTFDAAGRVASVEQNDQEPVRIIWNSDARVEKINDRVVEWNRGGALKTFQDISYQVDSIGWVVKRDNTTVFGYDGKGRLVSARSSQLRINIFYDREDRVVQIQNSKDFIHFYYGYIDTPKLVSHFSKNGKISTLFYDDDSVPFAMQSDDGTRYALLTDETSTIKAIIGDSNVLRIIDRSVFGALLPSSSSSHPFLPIGYLGGIEISEISVSILNNGRPLDLYSERYMSISPEAVVRLELNEKFSNSIDLMALEIDRQPFRVENVPEDFETWFSLAGLSPNLLPSAHLGLPASSAIVHRLLSSFPRKLRPLTHLTTVLPTRLASDISLTSPTSETSWSIDDVGFSNLLILNEDATTGEVMVEMLSDLKSEEREVISKLFDGVKSLDFATWGLVPTRHLWRAPNSKLELSSTSFSHFTMAVNKDSVELRNGKSKIVVHFSENKAEIVKKIVEELKTRENIAVWRAERKRAEAGEKTWRQWSDRETRELTSKGSVSGYDIEMKPAHQSGLLASVHSWKFRKSE.

Disordered stretches follow at residues 1–37, 127–156, and 170–204; these read MFQH…HDYT, TTSS…PTYS, and GTNQ…KKFD. The Cytoplasmic segment spans residues 1 to 216; sequence MFQHRTTNAQ…SDTCSRWPSK (216 aa). The span at 11–24 shows a compositional bias: pro residues; the sequence is GPPPNRPMPRPPAG. Positions 127 to 136 are enriched in low complexity; the sequence is TTSSTLSPAS. A helical transmembrane segment spans residues 217–237; sequence WNILLAAALLVALFVICILLF. Topologically, residues 238-2684 are extracellular; the sequence is RAPNYVYTQP…VHSWKFRKSE (2447 aa). 2 consecutive EGF-like domains span residues 463–499 and 501–534; these read TGRT…KECE and RHNW…EACE. 6 disulfides stabilise this stretch: C467-C476, C472-C487, C489-C498, C505-C516, C510-C522, and C524-C533. The interval 576 to 614 is disordered; that stretch reads PQAQSPPRRGQEPTESSKTRKAQVKPTPTSEKKKESREL. 2 stretches are compositionally biased toward basic and acidic residues: residues 584-593 and 605-614; these read RGQEPTESSK and SEKKKESREL. EGF-like domains are found at residues 650–684 and 716–753; these read DSVD…SNCT and AIDG…VDCS. 6 cysteine pairs are disulfide-bonded: C654–C666, C659–C672, C674–C683, C720–C730, C724–C741, and C743–C752. NHL repeat units lie at residues 1276 to 1317, 1334 to 1378, 1398 to 1441, and 1470 to 1513; these read DSCG…IDTT, RTCA…VVHD, SASA…VRKL, and AVSL…VSAR.

Belongs to the tenascin family. Teneurin subfamily. Probably proteolytically processed to generate a N-terminal intracellular domain. Isoform 1 is mainly expressed in organs derived from the mesoderm, including the pharynx, vulva muscles, gonad distal tip cells, intestine and several tail neurons. Isoform 2 is mainly expressed in the organs derived from the ectoderm, including hypodermal cells, head ganglion neurons and tail neurons (at protein level).

The protein resides in the nucleus. Its subcellular location is the cell membrane. It is found in the membrane. In terms of biological role, plays a role in the gonadal basement membrane maintenance and/or adhesion early in development. Contributes to the guidance of pharyngeal neurons. This Caenorhabditis elegans protein is Teneurin-1 (ten-1).